We begin with the raw amino-acid sequence, 412 residues long: Protein translocase subunit SecY (412 aa).

9 consecutive transmembrane segments (helical) span residues 17-37 (IFLT…PVPG), 58-78 (IFSG…VPYI), 117-137 (ALGW…PYVF), 143-163 (FVVQ…WFSE), 170-190 (IGNG…PKLI), 251-271 (VMPI…GQVI), 293-313 (YLIF…SLII), 350-370 (TFLG…IENI), and 372-392 (SIST…GVAI).

This sequence belongs to the SecY/SEC61-alpha family. Component of the plastid Sec protein translocase complex, which is composed of at least SecY and SecE.

Its subcellular location is the plastid. It is found in the chloroplast thylakoid membrane. The central subunit of the protein translocation channel SecYE. Consists of two halves formed by TMs 1-5 and 6-10. These two domains form a lateral gate at the front which open onto the bilayer between TMs 2 and 7, and are clamped together by SecE at the back. The channel is closed by both a pore ring composed of hydrophobic SecY resides and a short helix (helix 2A) on the extracellular side of the membrane which forms a plug. The polypeptide is Protein translocase subunit SecY (Pyrenomonas salina).